The primary structure comprises 80 residues: U-Asilidin(1)-Dg12 (80 aa).

Positions methionine 1 to serine 24 are cleaved as a signal peptide. Positions leucine 25–leucine 46 are excised as a propeptide. 3 disulfides stabilise this stretch: cysteine 53/cysteine 67, cysteine 60/cysteine 71, and cysteine 66/cysteine 78.

This sequence belongs to the asilidin-1 family. Expressed by the venom gland.

The protein resides in the secreted. Functionally, neurotoxin that may modulate ions channels (other than those tested). In vivo, induces neurotoxic effects when injected into insects (tested on L.cuprina and A.domesticus). This is U-Asilidin(1)-Dg12 from Dolopus genitalis (Giant Australian assassin fly).